Reading from the N-terminus, the 433-residue chain is Glutamate-1-semialdehyde 2,1-aminomutase (433 aa).

Position 272 is an N6-(pyridoxal phosphate)lysine (K272).

The protein belongs to the class-III pyridoxal-phosphate-dependent aminotransferase family. HemL subfamily. In terms of assembly, homodimer. Requires pyridoxal 5'-phosphate as cofactor.

It localises to the cytoplasm. It carries out the reaction (S)-4-amino-5-oxopentanoate = 5-aminolevulinate. The protein operates within porphyrin-containing compound metabolism; protoporphyrin-IX biosynthesis; 5-aminolevulinate from L-glutamyl-tRNA(Glu): step 2/2. The polypeptide is Glutamate-1-semialdehyde 2,1-aminomutase (Magnetococcus marinus (strain ATCC BAA-1437 / JCM 17883 / MC-1)).